The sequence spans 664 residues: UvrABC system protein B (664 aa).

A Helicase ATP-binding domain is found at 24 to 182 (AGLRAGYRHQ…QLIDLQFERN (159 aa)). 37–44 (GATGTGKT) serves as a coordination point for ATP. The Beta-hairpin motif lies at 90 to 113 (YYDEYTPEAYVPSKDLYIEKEASI). Positions 427–593 (QIDDLLGEIR…GIAKGVRDLT (167 aa)) constitute a Helicase C-terminal domain. The UVR domain maps to 624–659 (LKLIKDLEKQMKQAAKALAFEKAAALRDQIVELRQA).

It belongs to the UvrB family. In terms of assembly, forms a heterotetramer with UvrA during the search for lesions. Interacts with UvrC in an incision complex.

It localises to the cytoplasm. The UvrABC repair system catalyzes the recognition and processing of DNA lesions. A damage recognition complex composed of 2 UvrA and 2 UvrB subunits scans DNA for abnormalities. Upon binding of the UvrA(2)B(2) complex to a putative damaged site, the DNA wraps around one UvrB monomer. DNA wrap is dependent on ATP binding by UvrB and probably causes local melting of the DNA helix, facilitating insertion of UvrB beta-hairpin between the DNA strands. Then UvrB probes one DNA strand for the presence of a lesion. If a lesion is found the UvrA subunits dissociate and the UvrB-DNA preincision complex is formed. This complex is subsequently bound by UvrC and the second UvrB is released. If no lesion is found, the DNA wraps around the other UvrB subunit that will check the other stand for damage. The sequence is that of UvrABC system protein B from Chloroflexus aggregans (strain MD-66 / DSM 9485).